The primary structure comprises 142 residues: Ribosome maturation factor RimP (142 aa).

Belongs to the RimP family.

It localises to the cytoplasm. In terms of biological role, required for maturation of 30S ribosomal subunits. In Aromatoleum aromaticum (strain DSM 19018 / LMG 30748 / EbN1) (Azoarcus sp. (strain EbN1)), this protein is Ribosome maturation factor RimP.